The sequence spans 354 residues: Protein RecA (354 aa).

Residue 65 to 72 (GPESSGKT) coordinates ATP.

It belongs to the RecA family.

It is found in the cytoplasm. Its function is as follows. Can catalyze the hydrolysis of ATP in the presence of single-stranded DNA, the ATP-dependent uptake of single-stranded DNA by duplex DNA, and the ATP-dependent hybridization of homologous single-stranded DNAs. It interacts with LexA causing its activation and leading to its autocatalytic cleavage. The sequence is that of Protein RecA from Pseudomonas syringae pv. syringae (strain B728a).